The chain runs to 519 residues: MKYKDLRDFIHSLEQRGELRRITQPVSPALEMTELCDRVLRAGGPALLFDAPDGYRFPVLGNLFGTPRRVALGMGVDADDNATLASLRDIGRLLSALKEPDPPKSLKDAGKLLSLAKAVWDMGPKTVSAPPCQEIVWEGDDVDLHKLPIQTCWPGDAGPLLTWGLTVTRGPNKTRQNLGIYRQQLIGRNKLIMRWLAHRGGALDFREFALKHPGQPYPVAVVLGADPATALGAVTPVPDTLSEYQFAGLLRGARTELAKCLTPGVDTLQVPARAEIVLEGFIHPQQGAPAPAPEGAPPRPTAGAAAGYEHALEGPYGDHTGYYNEQEWFPVFTVERITMRRDAIYHSTYTGKPPDEPAVLGVALNEVFVPLLQKQFSEITDFYLPPEGCSYRMAIVQMKKSYAGHAKRVMFGVWSFLRQFMYTKFIVVVDEDVNVRDWKEVIWAITTRVDPARDTVLVENTPIDYLDFASPVAGLGSKMGLDATNKWPGETQREWGRPIEMDAAVKARVDRLWTEIGLS.

N177 serves as a coordination point for Mn(2+). Residues 180–182 (IYR), 194–196 (RWL), and 199–200 (RG) each bind prenylated FMN. Mn(2+) is bound at residue E243. D318 functions as the Proton donor in the catalytic mechanism.

It belongs to the UbiD family. In terms of assembly, homohexamer. Prenylated FMN serves as cofactor. The cofactor is Mn(2+).

It is found in the cell membrane. The catalysed reaction is a 4-hydroxy-3-(all-trans-polyprenyl)benzoate + H(+) = a 2-(all-trans-polyprenyl)phenol + CO2. Its pathway is cofactor biosynthesis; ubiquinone biosynthesis. In terms of biological role, catalyzes the decarboxylation of 3-octaprenyl-4-hydroxy benzoate to 2-octaprenylphenol, an intermediate step in ubiquinone biosynthesis. The polypeptide is 3-octaprenyl-4-hydroxybenzoate carboxy-lyase (Burkholderia thailandensis (strain ATCC 700388 / DSM 13276 / CCUG 48851 / CIP 106301 / E264)).